The following is a 112-amino-acid chain: Large ribosomal subunit protein eL36y (112 aa).

Over residues 79–88 the composition is skewed to basic residues; it reads KLGTHKRAKR. The interval 79–112 is disordered; that stretch reads KLGTHKRAKRKREEMSSVLRKMRSGGGGATEKKK. Residues 102–112 show a composition bias toward gly residues; it reads SGGGGATEKKK.

The protein belongs to the eukaryotic ribosomal protein eL36 family.

This is Large ribosomal subunit protein eL36y (RPL36B) from Arabidopsis thaliana (Mouse-ear cress).